Reading from the N-terminus, the 888-residue chain is Serine/arginine repetitive matrix protein 1 (888 aa).

The 100-residue stretch at 27–126 (QLKFAECLEK…AGIPTAFLEL (100 aa)) folds into the PWI domain. The segment covering 139 to 169 (EKLASMKKQDEDKEKRDKEDKDNREKRDRSR) has biased composition (basic and acidic residues). Positions 139-888 (EKLASMKKQD…MRKAQVSPPS (750 aa)) are disordered. The segment covering 170–206 (SPRRRKSRSPSPRRRSSPIRRERKRSHSRSPHHRTKS) has biased composition (basic residues). 2 stretches are compositionally biased toward basic and acidic residues: residues 213-232 (PEKK…KETV) and 254-276 (ETKE…EKTR). Basic residues-rich tracts occupy residues 277–325 (QRSP…RTPP) and 332–347 (PRHR…RRRS). Low complexity-rich tracts occupy residues 348–364 (SASL…SRSR) and 473–496 (SVQQ…SSSS). Composition is skewed to basic residues over residues 528 to 554 (PRKR…RRRS) and 561 to 585 (PRRR…RSPS). Residues 586–598 (PRRYSPPIQRRYS) show a composition bias toward low complexity. 2 stretches are compositionally biased toward basic residues: residues 614–629 (PKRR…RRVS) and 642–656 (AKRR…HRKG). The segment covering 662–677 (SNRETRSPPQNKRDSP) has biased composition (basic and acidic residues). Low complexity-rich tracts occupy residues 697–712 (ASAS…PSTR), 728–749 (ASTP…SGSP), and 763–775 (ARSR…WSPA). Residues 780-790 (SPTQSPSPARN) are compositionally biased toward polar residues. Over residues 798-823 (KKKKKKKDKKHKKDKKHKKHKKHKKE) the composition is skewed to basic residues. A compositionally biased stretch (low complexity) spans 826-843 (AVAAAPAAVAAADTTSAQ). The segment covering 866–876 (DLEKHLREKAL) has biased composition (basic and acidic residues).

The protein belongs to the splicing factor SR family.

Its subcellular location is the nucleus. Its function is as follows. Involved in pre-mRNA splicing and processing events. This chain is Serine/arginine repetitive matrix protein 1 (SRRM1), found in Gallus gallus (Chicken).